We begin with the raw amino-acid sequence, 250 residues long: Kallikrein-9 (250 aa).

Positions 1-15 (MKLGLLCALLSLLAG) are cleaved as a signal peptide. Residues 23-249 (AIGAEECRPN…YLDWIQEIME (227 aa)) form the Peptidase S1 domain. Intrachain disulfides connect C29–C164, C48–C64, C136–C238, C143–C210, C175–C189, and C200–C225. Residues H63 and D111 each act as charge relay system in the active site. Residues N131 and N166 are each glycosylated (N-linked (GlcNAc...) asparagine). S204 functions as the Charge relay system in the catalytic mechanism. A glycan (N-linked (GlcNAc...) asparagine) is linked at N211.

It belongs to the peptidase S1 family. Kallikrein subfamily. As to expression, skin, thymus, trachea, cerebellum and spinal cord.

The protein localises to the secreted. This is Kallikrein-9 (KLK9) from Homo sapiens (Human).